The sequence spans 375 residues: D-aspartate oxidase (375 aa).

The signal sequence occupies residues 1–17 (MATVCVVGSGILGLAVA). The FAD site is built by Ser-9, Leu-12, Asp-34, Ser-51, and Gly-55. N-linked (GlcNAc...) asparagine glycosylation is present at Asn-203. FAD contacts are provided by Arg-322, Gly-354, and Tyr-355.

This sequence belongs to the DAMOX/DASOX family. The cofactor is FAD.

It catalyses the reaction D-aspartate + O2 + H2O = oxaloacetate + H2O2 + NH4(+). It carries out the reaction D-glutamate + O2 + H2O = H2O2 + 2-oxoglutarate + NH4(+). Selectively catalyzes the oxidative deamination of acidic amino acids. Protects the organism from the toxicity of D-amino acids. Enables the organism to utilize D-amino acids as a source of nutrients. Enables the organism to utilize D-aspartate as a nitrogen source. The chain is D-aspartate oxidase (DDO) from Komagataella phaffii (strain GS115 / ATCC 20864) (Yeast).